We begin with the raw amino-acid sequence, 282 residues long: uncharacterized protein (282 aa).

Disordered regions lie at residues 1–45 and 201–259; these read MPLE…EEDE and DRRR…KPWG. Basic and acidic residues predominate over residues 10-19; that stretch reads SEMKEFKEST. Residues 26 to 38 show a composition bias toward polar residues; the sequence is SVSSEETLTQSMV. Positions 201 to 237 are enriched in basic and acidic residues; sequence DRRRKEDSKARSRLTRREEHSEHHRSGKSRRERERRS.

This is an uncharacterized protein from Ostreid herpesvirus 1 (isolate France) (OsHV-1).